Here is a 517-residue protein sequence, read N- to C-terminus: 2-isopropylmalate synthase (517 aa).

The 263-residue stretch at 7 to 269 (VIIFDTTLRD…ETGIDTTQIV (263 aa)) folds into the Pyruvate carboxyltransferase domain. Residues aspartate 16, histidine 204, histidine 206, and asparagine 240 each contribute to the Mn(2+) site. The tract at residues 395–517 (KFISQKISTE…KPKAQGSGTI (123 aa)) is regulatory domain.

It belongs to the alpha-IPM synthase/homocitrate synthase family. LeuA type 1 subfamily. Homodimer. The cofactor is Mn(2+).

The protein localises to the cytoplasm. The catalysed reaction is 3-methyl-2-oxobutanoate + acetyl-CoA + H2O = (2S)-2-isopropylmalate + CoA + H(+). It functions in the pathway amino-acid biosynthesis; L-leucine biosynthesis; L-leucine from 3-methyl-2-oxobutanoate: step 1/4. Functionally, catalyzes the condensation of the acetyl group of acetyl-CoA with 3-methyl-2-oxobutanoate (2-ketoisovalerate) to form 3-carboxy-3-hydroxy-4-methylpentanoate (2-isopropylmalate). In Neisseria meningitidis serogroup A / serotype 4A (strain DSM 15465 / Z2491), this protein is 2-isopropylmalate synthase.